Reading from the N-terminus, the 155-residue chain is SsrA-binding protein (155 aa).

This sequence belongs to the SmpB family.

Its subcellular location is the cytoplasm. In terms of biological role, required for rescue of stalled ribosomes mediated by trans-translation. Binds to transfer-messenger RNA (tmRNA), required for stable association of tmRNA with ribosomes. tmRNA and SmpB together mimic tRNA shape, replacing the anticodon stem-loop with SmpB. tmRNA is encoded by the ssrA gene; the 2 termini fold to resemble tRNA(Ala) and it encodes a 'tag peptide', a short internal open reading frame. During trans-translation Ala-aminoacylated tmRNA acts like a tRNA, entering the A-site of stalled ribosomes, displacing the stalled mRNA. The ribosome then switches to translate the ORF on the tmRNA; the nascent peptide is terminated with the 'tag peptide' encoded by the tmRNA and targeted for degradation. The ribosome is freed to recommence translation, which seems to be the essential function of trans-translation. The polypeptide is SsrA-binding protein (Streptococcus equi subsp. zooepidemicus (strain H70)).